The primary structure comprises 308 residues: Ribonuclease HIII (308 aa).

Positions 91–308 (KNVIGSDEVG…TEKALKMVKK (218 aa)) constitute an RNase H type-2 domain. Aspartate 97, glutamate 98, and aspartate 202 together coordinate a divalent metal cation.

The protein belongs to the RNase HII family. RnhC subfamily. Mn(2+) serves as cofactor. Mg(2+) is required as a cofactor.

Its subcellular location is the cytoplasm. It catalyses the reaction Endonucleolytic cleavage to 5'-phosphomonoester.. Endonuclease that specifically degrades the RNA of RNA-DNA hybrids. The sequence is that of Ribonuclease HIII from Listeria monocytogenes serotype 4b (strain CLIP80459).